The primary structure comprises 710 residues: Interleukin-1 receptor-associated kinase 1 (710 aa).

The region spanning 27-106 (MCRFYKVMDA…DIITAWHPPA (80 aa)) is the Death domain. Phosphothreonine; by PKC/PRKCI is present on Thr-66. Positions 107–133 (PVVPPSTAAPRPSSISAGSEAGDWSPR) are disordered. Residues 110–211 (PPSTAAPRPS…FCEISQGTCN (102 aa)) are proST region. Over residues 111-123 (PSTAAPRPSSISA) the composition is skewed to low complexity. Ser-131 carries the phosphoserine modification. Residues Lys-134 and Lys-180 each participate in a glycyl lysine isopeptide (Lys-Gly) (interchain with G-Cter in ubiquitin) cross-link. A disordered region spans residues 169-190 (PPLPSSAPSSTKSSPESPVSGL). Residues 174–188 (SAPSSTKSSPESPVS) show a composition bias toward low complexity. Phosphothreonine; by IRAK4 is present on Thr-209. The Protein kinase domain occupies 212 to 521 (FSEELRIGEG…TQVYKRLEGL (310 aa)). ATP is bound by residues 218–226 (IGEGGFGCV) and Lys-239. Catalysis depends on Asp-340, which acts as the Proton acceptor. Residues 342–345 (KSSN) and Asp-358 contribute to the ATP site. At Ser-375 the chain carries Phosphoserine. Thr-387 carries the post-translational modification Phosphothreonine. 2 disordered regions span residues 527-655 (WELE…SEPP) and 689-710 (FPGL…EFQS). The segment covering 537–553 (PSPQENSYMSTTGSAQS) has biased composition (polar residues). Residue Ser-553 is modified to Phosphoserine. The span at 567–576 (APAQAAQQLQ) shows a compositional bias: low complexity. A compositionally biased stretch (polar residues) spans 616-639 (SCTQGGTTRESSVRSSPGFQPTTM). The segment covering 640 to 654 (EGSPTGSSSLLSSEP) has biased composition (low complexity).

Belongs to the protein kinase superfamily. TKL Ser/Thr protein kinase family. Pelle subfamily. In terms of assembly, homodimer. Forms a complex with TRAF6, PELI1, IRAK4 and MYD88. Direct binding of SMAD6 to PELI1 prevents complex formation and hence negatively regulates IL1R-TLR signaling and eventually NF-kappa-B-mediated gene expression. The TRAF6-PELI1-IRAK4-MYD88 complex recruits MAP3K7/TAK1, TAB1 and TAB2 to mediate NF-kappa-B activation. Interaction with MYD88 recruits IRAK1 to the stimulated receptor complex. Interacts with TOLLIP; this interaction occurs in the cytosol prior to receptor activation. Interacts with IL1RL1. Interacts (when polyubiquitinated) with IKBKG/NEMO. Interacts with RSAD2/viperin. Interacts with IRAK1BP1. Interacts with PELI2. Interacts with ZC3H12A; this interaction increases the interaction between ZC3H12A and IKBKB/IKKB. Interacts with IRAK4. Interacts with PELI3. Interacts with PELI1 and TRAF6. Interacts with INAVA; the interaction takes place upon PRR stimulation. Interacts (via C-terminus) with NFATC4 (via N-terminus). Mg(2+) serves as cofactor. Following recruitment on the activated receptor complex, phosphorylated on Thr-209, probably by IRAK4, resulting in a conformational change of the kinase domain, allowing further phosphorylations to take place. Thr-387 phosphorylation in the activation loop is required to achieve full enzymatic activity. Post-translationally, polyubiquitinated by TRAF6 after cell stimulation with IL-1-beta by PELI1, PELI2 and PELI3. Polyubiquitination occurs with polyubiquitin chains linked through 'Lys-63'. Ubiquitination promotes interaction with NEMO/IKBKG. Also sumoylated; leading to nuclear translocation. In terms of tissue distribution, highly expressed in liver, followed by kidney and skeletal muscle.

It localises to the cytoplasm. The protein resides in the nucleus. The protein localises to the lipid droplet. The catalysed reaction is L-seryl-[protein] + ATP = O-phospho-L-seryl-[protein] + ADP + H(+). The enzyme catalyses L-threonyl-[protein] + ATP = O-phospho-L-threonyl-[protein] + ADP + H(+). Serine/threonine-protein kinase that plays a critical role in initiating innate immune response against foreign pathogens. Involved in Toll-like receptor (TLR) and IL-1R signaling pathways. Is rapidly recruited by MYD88 to the receptor-signaling complex upon TLR activation. Association with MYD88 leads to IRAK1 phosphorylation by IRAK4 and subsequent autophosphorylation and kinase activation. Phosphorylates E3 ubiquitin ligases Pellino proteins (PELI1, PELI2 and PELI3) to promote pellino-mediated polyubiquitination of IRAK1. Then, the ubiquitin-binding domain of IKBKG/NEMO binds to polyubiquitinated IRAK1 bringing together the IRAK1-MAP3K7/TAK1-TRAF6 complex and the NEMO-IKKA-IKKB complex. In turn, MAP3K7/TAK1 activates IKKs (CHUK/IKKA and IKBKB/IKKB) leading to NF-kappa-B nuclear translocation and activation. Alternatively, phosphorylates TIRAP to promote its ubiquitination and subsequent degradation. Phosphorylates the interferon regulatory factor 7 (IRF7) to induce its activation and translocation to the nucleus, resulting in transcriptional activation of type I IFN genes, which drive the cell in an antiviral state. When sumoylated, translocates to the nucleus and phosphorylates STAT3. The polypeptide is Interleukin-1 receptor-associated kinase 1 (Irak1) (Mus musculus (Mouse)).